The chain runs to 137 residues: Transcription antitermination protein NusB (137 aa).

It belongs to the NusB family.

Involved in transcription antitermination. Required for transcription of ribosomal RNA (rRNA) genes. Binds specifically to the boxA antiterminator sequence of the ribosomal RNA (rrn) operons. This chain is Transcription antitermination protein NusB, found in Aeromonas salmonicida (strain A449).